The primary structure comprises 217 residues: 3-oxo-tetronate 4-phosphate decarboxylase (217 aa).

Zn(2+) is bound by residues His93 and His95. Catalysis depends on Tyr120, which acts as the Proton donor.

This sequence belongs to the aldolase class II family. AraD/FucA subfamily. The cofactor is Zn(2+).

The enzyme catalyses 3-dehydro-4-O-phospho-D-erythronate + H(+) = dihydroxyacetone phosphate + CO2. It catalyses the reaction 3-dehydro-4-O-phospho-L-erythronate + H(+) = dihydroxyacetone phosphate + CO2. In terms of biological role, catalyzes the decarboxylation of 3-oxo-tetronate 4-phosphate to dihydroxyacetone phosphate (DHAP) and CO(2). The polypeptide is 3-oxo-tetronate 4-phosphate decarboxylase (Cupriavidus necator (strain ATCC 17699 / DSM 428 / KCTC 22496 / NCIMB 10442 / H16 / Stanier 337) (Ralstonia eutropha)).